We begin with the raw amino-acid sequence, 98 residues long: NADH-ubiquinone oxidoreductase chain 4L (98 aa).

3 consecutive transmembrane segments (helical) span residues 1–21, 29–49, and 59–79; these read MSLV…GLLM, SLLC…LTIL, and MPII…SLLV.

This sequence belongs to the complex I subunit 4L family. As to quaternary structure, core subunit of respiratory chain NADH dehydrogenase (Complex I) which is composed of 45 different subunits.

It localises to the mitochondrion inner membrane. The enzyme catalyses a ubiquinone + NADH + 5 H(+)(in) = a ubiquinol + NAD(+) + 4 H(+)(out). Functionally, core subunit of the mitochondrial membrane respiratory chain NADH dehydrogenase (Complex I) which catalyzes electron transfer from NADH through the respiratory chain, using ubiquinone as an electron acceptor. Part of the enzyme membrane arm which is embedded in the lipid bilayer and involved in proton translocation. The polypeptide is NADH-ubiquinone oxidoreductase chain 4L (MT-ND4L) (Cervus elaphus (Red deer)).